Reading from the N-terminus, the 165-residue chain is Transcription antitermination protein NusB (165 aa).

It belongs to the NusB family.

Functionally, involved in transcription antitermination. Required for transcription of ribosomal RNA (rRNA) genes. Binds specifically to the boxA antiterminator sequence of the ribosomal RNA (rrn) operons. The sequence is that of Transcription antitermination protein NusB from Nitratidesulfovibrio vulgaris (strain DSM 19637 / Miyazaki F) (Desulfovibrio vulgaris).